The chain runs to 617 residues: Leucine aminopeptidase 2 (617 aa).

A peptide-binding positions include glutamine 139 to glutamine 141 and proline 271 to glutamate 276. Histidine 300 provides a ligand contact to Zn(2+). Glutamate 301 serves as the catalytic Proton acceptor. Zn(2+)-binding residues include histidine 304 and glutamate 323. Catalysis depends on tyrosine 388, which acts as the Proton donor.

The protein belongs to the peptidase M1 family. Requires Zn(2+) as cofactor.

Its subcellular location is the cytoplasm. It is found in the nucleus. It catalyses the reaction an epoxide + H2O = an ethanediol. Its function is as follows. Aminopeptidase that preferentially cleaves di- and tripeptides. Also has low epoxide hydrolase activity (in vitro). Can hydrolyze the epoxide leukotriene LTA(4) but it forms preferentially 5,6-dihydroxy-7,9,11,14-eicosatetraenoic acid rather than the cytokine leukotriene B(4) as the product compared to the homologous mammalian enzyme (in vitro). This chain is Leucine aminopeptidase 2, found in Neosartorya fischeri (strain ATCC 1020 / DSM 3700 / CBS 544.65 / FGSC A1164 / JCM 1740 / NRRL 181 / WB 181) (Aspergillus fischerianus).